We begin with the raw amino-acid sequence, 490 residues long: Protein nucleotidyltransferase YdiU (490 aa).

Positions 86, 88, 89, 109, 121, 122, 172, and 179 each coordinate ATP. The active-site Proton acceptor is aspartate 248. Mg(2+)-binding residues include asparagine 249 and aspartate 258. An ATP-binding site is contributed by aspartate 258.

The protein belongs to the SELO family. Mg(2+) is required as a cofactor. The cofactor is Mn(2+).

It catalyses the reaction L-seryl-[protein] + ATP = 3-O-(5'-adenylyl)-L-seryl-[protein] + diphosphate. The enzyme catalyses L-threonyl-[protein] + ATP = 3-O-(5'-adenylyl)-L-threonyl-[protein] + diphosphate. It carries out the reaction L-tyrosyl-[protein] + ATP = O-(5'-adenylyl)-L-tyrosyl-[protein] + diphosphate. The catalysed reaction is L-histidyl-[protein] + UTP = N(tele)-(5'-uridylyl)-L-histidyl-[protein] + diphosphate. It catalyses the reaction L-seryl-[protein] + UTP = O-(5'-uridylyl)-L-seryl-[protein] + diphosphate. The enzyme catalyses L-tyrosyl-[protein] + UTP = O-(5'-uridylyl)-L-tyrosyl-[protein] + diphosphate. Functionally, nucleotidyltransferase involved in the post-translational modification of proteins. It can catalyze the addition of adenosine monophosphate (AMP) or uridine monophosphate (UMP) to a protein, resulting in modifications known as AMPylation and UMPylation. The polypeptide is Protein nucleotidyltransferase YdiU (Rhizobium meliloti (strain 1021) (Ensifer meliloti)).